We begin with the raw amino-acid sequence, 103 residues long: Small ribosomal subunit protein uS10 (103 aa).

Belongs to the universal ribosomal protein uS10 family. Part of the 30S ribosomal subunit.

In terms of biological role, involved in the binding of tRNA to the ribosomes. This chain is Small ribosomal subunit protein uS10, found in Saccharophagus degradans (strain 2-40 / ATCC 43961 / DSM 17024).